We begin with the raw amino-acid sequence, 284 residues long: 4-hydroxy-3-methylbut-2-enyl diphosphate reductase (284 aa).

Position 12 (Cys-12) interacts with [4Fe-4S] cluster. (2E)-4-hydroxy-3-methylbut-2-enyl diphosphate-binding residues include His-40 and His-72. His-40 and His-72 together coordinate dimethylallyl diphosphate. Residues His-40 and His-72 each contribute to the isopentenyl diphosphate site. Cys-94 contacts [4Fe-4S] cluster. His-122 is a binding site for (2E)-4-hydroxy-3-methylbut-2-enyl diphosphate. His-122 serves as a coordination point for dimethylallyl diphosphate. Isopentenyl diphosphate is bound at residue His-122. Residue Glu-124 is the Proton donor of the active site. (2E)-4-hydroxy-3-methylbut-2-enyl diphosphate is bound at residue Thr-161. Residue Cys-193 coordinates [4Fe-4S] cluster. Positions 221, 223, and 264 each coordinate (2E)-4-hydroxy-3-methylbut-2-enyl diphosphate. Dimethylallyl diphosphate is bound by residues Ser-221, Asn-223, and Ser-264. Positions 221, 223, and 264 each coordinate isopentenyl diphosphate.

The protein belongs to the IspH family. Requires [4Fe-4S] cluster as cofactor.

It carries out the reaction isopentenyl diphosphate + 2 oxidized [2Fe-2S]-[ferredoxin] + H2O = (2E)-4-hydroxy-3-methylbut-2-enyl diphosphate + 2 reduced [2Fe-2S]-[ferredoxin] + 2 H(+). It catalyses the reaction dimethylallyl diphosphate + 2 oxidized [2Fe-2S]-[ferredoxin] + H2O = (2E)-4-hydroxy-3-methylbut-2-enyl diphosphate + 2 reduced [2Fe-2S]-[ferredoxin] + 2 H(+). The protein operates within isoprenoid biosynthesis; dimethylallyl diphosphate biosynthesis; dimethylallyl diphosphate from (2E)-4-hydroxy-3-methylbutenyl diphosphate: step 1/1. Its pathway is isoprenoid biosynthesis; isopentenyl diphosphate biosynthesis via DXP pathway; isopentenyl diphosphate from 1-deoxy-D-xylulose 5-phosphate: step 6/6. Its function is as follows. Catalyzes the conversion of 1-hydroxy-2-methyl-2-(E)-butenyl 4-diphosphate (HMBPP) into a mixture of isopentenyl diphosphate (IPP) and dimethylallyl diphosphate (DMAPP). Acts in the terminal step of the DOXP/MEP pathway for isoprenoid precursor biosynthesis. This chain is 4-hydroxy-3-methylbut-2-enyl diphosphate reductase, found in Dehalococcoides mccartyi (strain CBDB1).